The chain runs to 301 residues: Prestalk A differentiation protein A (301 aa).

The protein belongs to the NmrA-type oxidoreductase family.

Involved in development and cell differentiation. The chain is Prestalk A differentiation protein A (padA) from Dictyostelium discoideum (Social amoeba).